The primary structure comprises 90 residues: Small ribosomal subunit protein uS17 (90 aa).

It belongs to the universal ribosomal protein uS17 family. In terms of assembly, part of the 30S ribosomal subunit.

Functionally, one of the primary rRNA binding proteins, it binds specifically to the 5'-end of 16S ribosomal RNA. The protein is Small ribosomal subunit protein uS17 of Paraburkholderia phytofirmans (strain DSM 17436 / LMG 22146 / PsJN) (Burkholderia phytofirmans).